A 59-amino-acid polypeptide reads, in one-letter code: Potassium channel toxin alpha-KTx 3.10 (59 aa).

Residues 1 to 22 (MKVFFAVLIALFVCSMVIGIHG) form the signal peptide. 3 disulfide bridges follow: cysteine 30–cysteine 50, cysteine 36–cysteine 55, and cysteine 40–cysteine 57.

The protein belongs to the short scorpion toxin superfamily. Potassium channel inhibitor family. Alpha-KTx 03 subfamily. Expressed by the venom gland.

It localises to the secreted. In terms of biological role, inhibits insect potassium channel. Is at least a 100-fold more potent against the Drosophila Shaker channel than towards its mammalian homologs Kv1.1/KCNA1 and Kv1.3/KCNA3. The chain is Potassium channel toxin alpha-KTx 3.10 from Buthus israelis (Israeli scorpion).